The sequence spans 775 residues: N6-adenosine-methyltransferase non-catalytic subunit MTB (775 aa).

Residues 1–10 are compositionally biased toward basic and acidic residues; the sequence is MKKKQEESSL. Disordered stretches follow at residues 1 to 424 and 520 to 569; these read MKKK…GAIP and DRGG…EQND. A compositionally biased stretch (low complexity) spans 40-49; that stretch reads FESSSRSGGS. Composition is skewed to basic and acidic residues over residues 50–79, 100–117, 125–222, 229–278, and 333–344; these read KSKE…ERTH, DGDH…DSGG, EHGE…LKDN, SSGD…RGEA, and EWAHNQEGRQRS. Positions 375–400 are enriched in polar residues; sequence QRGSTPGRTNFVQTPNRGYQTPQGTR.

This sequence belongs to the MT-A70-like family. Forms homodimers. Interacts with HAKAI, MTA and VIR. Associates with MTA, FIP37, VIR and HAKAI to form the m6A writer complex which is essential for adenosine methylation at specific mRNA sequences.

It localises to the nucleus speckle. It is found in the nucleus. The protein resides in the nucleoplasm. Probable non-catalytic subunit of the N6-methyltransferase complex, a multiprotein complex that mediates N6-methyladenosine (m6A) methylation at the 5'-[AG]GAC-3' consensus sites of some mRNAs. Associates with MTA, FIP37, VIR and HAKAI to form the m6A writer complex which is essential for adenosine methylation at specific mRNA sequences. N6-methyladenosine (m6A) plays a role in mRNA stability, processing, translation efficiency and editing. This is N6-adenosine-methyltransferase non-catalytic subunit MTB from Arabidopsis thaliana (Mouse-ear cress).